A 498-amino-acid polypeptide reads, in one-letter code: ATP synthase subunit beta, chloroplastic (498 aa).

172 to 179 (GGAGVGKT) serves as a coordination point for ATP.

It belongs to the ATPase alpha/beta chains family. F-type ATPases have 2 components, CF(1) - the catalytic core - and CF(0) - the membrane proton channel. CF(1) has five subunits: alpha(3), beta(3), gamma(1), delta(1), epsilon(1). CF(0) has four main subunits: a(1), b(1), b'(1) and c(9-12).

The protein localises to the plastid. It localises to the chloroplast thylakoid membrane. The catalysed reaction is ATP + H2O + 4 H(+)(in) = ADP + phosphate + 5 H(+)(out). Produces ATP from ADP in the presence of a proton gradient across the membrane. The catalytic sites are hosted primarily by the beta subunits. The chain is ATP synthase subunit beta, chloroplastic from Solanum tuberosum (Potato).